We begin with the raw amino-acid sequence, 134 residues long: Fluoride-specific ion channel FluC (134 aa).

4 helical membrane passes run 7 to 27 (LAVA…TIMA), 38 to 58 (GTLL…IVLV), 69 to 89 (LFLF…AAES), and 110 to 130 (VGSL…LLGH). Na(+) is bound by residues Gly-77 and Thr-80.

It belongs to the fluoride channel Fluc/FEX (TC 1.A.43) family.

Its subcellular location is the cell inner membrane. The enzyme catalyses fluoride(in) = fluoride(out). With respect to regulation, na(+) is not transported, but it plays an essential structural role and its presence is essential for fluoride channel function. In terms of biological role, fluoride-specific ion channel. Important for reducing fluoride concentration in the cell, thus reducing its toxicity. The protein is Fluoride-specific ion channel FluC of Legionella pneumophila (strain Lens).